The chain runs to 125 residues: Flagellar protein FliT (125 aa).

Residues 1 to 50 are required for homodimerization; the sequence is MDNKMDLLSAYQRILSLSEQMLNLAKNEKWDELVDMEITYLKAVEVISHS. The fliD binding stretch occupies residues 60 to 98; it reads LQQKMTNILQIILDNENEIKKLLQKRLDELSKLIKQASQ.

Belongs to the FliT family. In terms of assembly, homodimer. Interacts with FliD and FlhC.

It is found in the cytoplasm. Its subcellular location is the cytosol. Its function is as follows. Dual-function protein that regulates the transcription of class 2 flagellar operons and that also acts as an export chaperone for the filament-capping protein FliD. As a transcriptional regulator, acts as an anti-FlhDC factor; it directly binds FlhC, thus inhibiting the binding of the FlhC/FlhD complex to class 2 promoters, resulting in decreased expression of class 2 flagellar operons. As a chaperone, effects FliD transition to the membrane by preventing its premature polymerization, and by directing it to the export apparatus. This is Flagellar protein FliT from Photorhabdus laumondii subsp. laumondii (strain DSM 15139 / CIP 105565 / TT01) (Photorhabdus luminescens subsp. laumondii).